The following is a 101-amino-acid chain: NAD(P)H-quinone oxidoreductase subunit 4L, chloroplastic (101 aa).

3 helical membrane passes run 2–22, 32–52, and 61–81; these read MLEHILVLSAYLFSIGIYGLI, MCLELILNAVNINFVTFSDFF, and IFSIFVIAIAAAEAAIGSAIV.

The protein belongs to the complex I subunit 4L family. NDH is composed of at least 16 different subunits, 5 of which are encoded in the nucleus.

It is found in the plastid. Its subcellular location is the chloroplast thylakoid membrane. The catalysed reaction is a plastoquinone + NADH + (n+1) H(+)(in) = a plastoquinol + NAD(+) + n H(+)(out). The enzyme catalyses a plastoquinone + NADPH + (n+1) H(+)(in) = a plastoquinol + NADP(+) + n H(+)(out). NDH shuttles electrons from NAD(P)H:plastoquinone, via FMN and iron-sulfur (Fe-S) centers, to quinones in the photosynthetic chain and possibly in a chloroplast respiratory chain. The immediate electron acceptor for the enzyme in this species is believed to be plastoquinone. Couples the redox reaction to proton translocation, and thus conserves the redox energy in a proton gradient. The protein is NAD(P)H-quinone oxidoreductase subunit 4L, chloroplastic of Gossypium hirsutum (Upland cotton).